Reading from the N-terminus, the 922-residue chain is Protein translocase subunit SecA (922 aa).

Residues Gln-87, 105 to 109 (GEGKT), and Asp-519 each bind ATP. The interval 850-891 (HASRQMRSIQGNAQHNSMGSFSGSGHGMGPTALSARSRPENA) is disordered. The segment covering 854-865 (QMRSIQGNAQHN) has biased composition (polar residues). Zn(2+) contacts are provided by Cys-906, Cys-908, Cys-917, and Cys-918.

It belongs to the SecA family. In terms of assembly, monomer and homodimer. Part of the essential Sec protein translocation apparatus which comprises SecA, SecYEG and auxiliary proteins SecDF. Other proteins may also be involved. The cofactor is Zn(2+).

It localises to the cell inner membrane. Its subcellular location is the cytoplasm. The enzyme catalyses ATP + H2O + cellular proteinSide 1 = ADP + phosphate + cellular proteinSide 2.. Its function is as follows. Part of the Sec protein translocase complex. Interacts with the SecYEG preprotein conducting channel. Has a central role in coupling the hydrolysis of ATP to the transfer of proteins into and across the cell membrane, serving as an ATP-driven molecular motor driving the stepwise translocation of polypeptide chains across the membrane. The chain is Protein translocase subunit SecA from Treponema denticola (strain ATCC 35405 / DSM 14222 / CIP 103919 / JCM 8153 / KCTC 15104).